The sequence spans 214 residues: Glycerol-3-phosphate acyltransferase (214 aa).

Transmembrane regions (helical) follow at residues 4–24 (LIVA…IVSA), 52–72 (AAIL…WFVV), 82–102 (ETSV…PVFF), 118–138 (LAIN…VAFF), and 159–179 (FLFG…LLVW).

The protein belongs to the PlsY family. As to quaternary structure, probably interacts with PlsX.

The protein localises to the cell inner membrane. It catalyses the reaction an acyl phosphate + sn-glycerol 3-phosphate = a 1-acyl-sn-glycero-3-phosphate + phosphate. The protein operates within lipid metabolism; phospholipid metabolism. Functionally, catalyzes the transfer of an acyl group from acyl-phosphate (acyl-PO(4)) to glycerol-3-phosphate (G3P) to form lysophosphatidic acid (LPA). This enzyme utilizes acyl-phosphate as fatty acyl donor, but not acyl-CoA or acyl-ACP. The sequence is that of Glycerol-3-phosphate acyltransferase from Paraburkholderia phytofirmans (strain DSM 17436 / LMG 22146 / PsJN) (Burkholderia phytofirmans).